A 366-amino-acid chain; its full sequence is Glutamate 5-kinase (366 aa).

An ATP-binding site is contributed by lysine 17. Serine 57, aspartate 144, and asparagine 156 together coordinate substrate. ATP contacts are provided by residues serine 176 to aspartate 177 and threonine 216 to lysine 222. A PUA domain is found at serine 278–proline 356.

It belongs to the glutamate 5-kinase family.

Its subcellular location is the cytoplasm. It catalyses the reaction L-glutamate + ATP = L-glutamyl 5-phosphate + ADP. It functions in the pathway amino-acid biosynthesis; L-proline biosynthesis; L-glutamate 5-semialdehyde from L-glutamate: step 1/2. In terms of biological role, catalyzes the transfer of a phosphate group to glutamate to form L-glutamate 5-phosphate. The polypeptide is Glutamate 5-kinase (Mycolicibacterium vanbaalenii (strain DSM 7251 / JCM 13017 / BCRC 16820 / KCTC 9966 / NRRL B-24157 / PYR-1) (Mycobacterium vanbaalenii)).